Here is a 989-residue protein sequence, read N- to C-terminus: MENGEIEGAADDGVPVPAPPNGRRYRPVGSSDRAVIQMTSMEPGSSSSTAVAAVSGITPQPPRNLTVDPSMQEDHTVSQGDSKLELFGFDSLVNILGLKSMTGEQIQAPSSPRDGEDVAITIGRPKETGPKFGTMMGVFVPCLQNILGIIYYIRFTWIVGMAGVWQSLVLVSFCGACTFLTGISLSAIATNGAMKGGGPYYLIGRALGPEVGVSIGLCFFLGNAVAGSMYVLGAVETFLDAVPSAGFFKESVTVVNNTLVNGTATASTATISTPSLHDLQVYGVIVTILLCFIVFGGVKIINKVAPAFLIPVLFSLLCIYLGVFIAPRHNAPKGITGLSITTFKDNWGSEYQRTNNAGVPDPNGSIYWDFNALVGLFFPAVTGIMAGSNRSASLKDTQRSIPIGTLSATLTTTAMYLFSVLLFGALATREELLTDRLLTATVAWPAPAVIYIGIILSTLGAALQSLTGAPRLLAAIANDDILPVLNYFKVSEGAEPHSATLFTAFICICCVVIGNLDLITPTITMFFLLCYAGVNLSCFLLDLLDAPSWRPRWKFHHWSLSLVGALLCVVIMFLISWSFTVVSLALASLIYYYVSLKGKAGDWGDGFKSAYFQLALRSLRSLGANQVHPKNWYPIPLIFCRPWGKLPENVPCHPKLADFANCMKKKGRGMSIFVSIIDGDYHELAEDAKTACRQLDTYIEYKRCEGVAEIIVAPSMSEGFRSIVQTMGLGNLKPNIIVMRYPEIWRRENLIQIPSTFVSIINDCIIANKAVVIVKGLDEWPNEYQRQYGTIDLYWIVRDGGLMLLLSQLLLTKETFESCKIQVFCIAEEDTDAEELKADVKKFLYDLRMHAEVIVVTMKSWEPHMESSSSGAPQDDSQEAYTSAQRRISTYLSEMKETAQREGHPLMEDGKQVVVNEQKIEKFLYTMFKLNSTILRYSRMAAVVLVSLPPPPLNHPAYFYMEYMDLLVENVPRMLIVRGYRRDVVTFFT.

The span at 1-10 (MENGEIEGAA) shows a compositional bias: acidic residues. Positions 1–29 (MENGEIEGAADDGVPVPAPPNGRRYRPVG) are disordered. At 1–132 (MENGEIEGAA…GRPKETGPKF (132 aa)) the chain is on the cytoplasmic side. Residues 133 to 153 (GTMMGVFVPCLQNILGIIYYI) traverse the membrane as a helical segment. Over 154-167 (RFTWIVGMAGVWQS) the chain is Extracellular. The chain crosses the membrane as a helical span at residues 168 to 188 (LVLVSFCGACTFLTGISLSAI). Topologically, residues 189 to 214 (ATNGAMKGGGPYYLIGRALGPEVGVS) are cytoplasmic. A helical transmembrane segment spans residues 215–235 (IGLCFFLGNAVAGSMYVLGAV). At 236–280 (ETFLDAVPSAGFFKESVTVVNNTLVNGTATASTATISTPSLHDLQ) the chain is on the extracellular side. Asparagine 256 and asparagine 261 each carry an N-linked (GlcNAc...) asparagine glycan. The helical transmembrane segment at 281-301 (VYGVIVTILLCFIVFGGVKII) threads the bilayer. Topologically, residues 302–304 (NKV) are cytoplasmic. The helical transmembrane segment at 305-325 (APAFLIPVLFSLLCIYLGVFI) threads the bilayer. The Extracellular segment spans residues 326–365 (APRHNAPKGITGLSITTFKDNWGSEYQRTNNAGVPDPNGS). Asparagine 363 carries N-linked (GlcNAc...) asparagine glycosylation. A helical membrane pass occupies residues 366–386 (IYWDFNALVGLFFPAVTGIMA). The Cytoplasmic portion of the chain corresponds to 387–405 (GSNRSASLKDTQRSIPIGT). A helical membrane pass occupies residues 406 to 426 (LSATLTTTAMYLFSVLLFGAL). At 427–441 (ATREELLTDRLLTAT) the chain is on the extracellular side. A helical membrane pass occupies residues 442–462 (VAWPAPAVIYIGIILSTLGAA). Residues 463 to 498 (LQSLTGAPRLLAAIANDDILPVLNYFKVSEGAEPHS) are Cytoplasmic-facing. Residues 499-519 (ATLFTAFICICCVVIGNLDLI) traverse the membrane as a helical segment. Residues 520–522 (TPT) are Extracellular-facing. A helical transmembrane segment spans residues 523 to 543 (ITMFFLLCYAGVNLSCFLLDL). Topologically, residues 544 to 551 (LDAPSWRP) are cytoplasmic. Residues 552–572 (RWKFHHWSLSLVGALLCVVIM) form a helical membrane-spanning segment. Residues 573–578 (FLISWS) lie on the Extracellular side of the membrane. Residues 579-599 (FTVVSLALASLIYYYVSLKGK) traverse the membrane as a helical segment. Over 600–989 (AGDWGDGFKS…YRRDVVTFFT (390 aa)) the chain is Cytoplasmic.

This sequence belongs to the SLC12A transporter family. Expressed in roots, stems and leaves with higher expression in root and leaf tips.

Its subcellular location is the membrane. Its function is as follows. Probable cation/chloride cotransporter that may mediate potassium-chloride cotransport. Involved in plant development and K(+) and Cl(-) homeostasis. May not be involved in sodium-chloride cotransport. This Oryza sativa subsp. japonica (Rice) protein is Cation-chloride cotransporter 1 (CCC1).